The primary structure comprises 487 residues: GTPase Der (487 aa).

EngA-type G domains lie at 5–169 (PKLA…SREI) and 178–351 (IKVA…ANSQ). GTP-binding positions include 11-18 (GRPNVGKS), 58-62 (DTGGI), 121-124 (NKID), 184-191 (GRANVGKS), 231-235 (DTAGI), and 296-299 (NKWD). The KH-like domain occupies 352 to 439 (KRITTHQLNK…IHLKGKTKKD (88 aa)). The segment at 441–466 (PVSSLSLTRKQTKSTDQENNEYDELY) is disordered.

This sequence belongs to the TRAFAC class TrmE-Era-EngA-EngB-Septin-like GTPase superfamily. EngA (Der) GTPase family. As to quaternary structure, associates with the 50S ribosomal subunit.

Functionally, GTPase that plays an essential role in the late steps of ribosome biogenesis. This Protochlamydia amoebophila (strain UWE25) protein is GTPase Der.